A 506-amino-acid polypeptide reads, in one-letter code: ATP synthase subunit alpha, chloroplastic (506 aa).

Position 170–177 (170–177 (GDRQTGKT)) interacts with ATP.

Belongs to the ATPase alpha/beta chains family. In terms of assembly, F-type ATPases have 2 components, CF(1) - the catalytic core - and CF(0) - the membrane proton channel. CF(1) has five subunits: alpha(3), beta(3), gamma(1), delta(1), epsilon(1). CF(0) has four main subunits: a, b, b' and c.

It localises to the plastid. It is found in the chloroplast thylakoid membrane. It carries out the reaction ATP + H2O + 4 H(+)(in) = ADP + phosphate + 5 H(+)(out). Produces ATP from ADP in the presence of a proton gradient across the membrane. The alpha chain is a regulatory subunit. This is ATP synthase subunit alpha, chloroplastic from Euglena gracilis.